The following is a 158-amino-acid chain: Secreted frizzled-related protein 1 (158 aa).

The FZ domain occupies Val1 to Met34. Asn38 carries N-linked (GlcNAc...) asparagine glycosylation. Intrachain disulfides connect Cys51/Cys121 and Cys68/Cys123. In terms of domain architecture, NTR spans Cys51–Glu158.

It belongs to the secreted frizzled-related protein (sFRP) family. As to quaternary structure, interacts with WNT4, WNT1, WNT2, WNT8, MYOC and FRZD6.

Its subcellular location is the secreted. Soluble frizzled-related proteins (sFRPS) function as modulators of Wnt signaling through direct interaction with Wnts. They have a role in regulating cell growth and differentiation in specific cell types. SFRP1 decreases intracellular beta-catenin levels. Has antiproliferative effects on vascular cells, in vitro and in vivo, and can induce, in vivo, an angiogenic response. In vascular cell cycle, delays the G1 phase and entry into the S phase. In kidney development, inhibits tubule formation and bud growth in metanephroi. Inhibits WNT1/WNT4-mediated TCF-dependent transcription. In Rattus norvegicus (Rat), this protein is Secreted frizzled-related protein 1 (Sfrp1).